Consider the following 278-residue polypeptide: 3-methyl-2-oxobutanoate hydroxymethyltransferase (278 aa).

Residues Asp-43 and Asp-82 each coordinate Mg(2+). Residues 43–44 (DS), Asp-82, and Lys-112 contribute to the 3-methyl-2-oxobutanoate site. A Mg(2+)-binding site is contributed by Glu-114. The active-site Proton acceptor is the Glu-181.

It belongs to the PanB family. In terms of assembly, homodecamer; pentamer of dimers. Mg(2+) is required as a cofactor.

It localises to the cytoplasm. The catalysed reaction is 3-methyl-2-oxobutanoate + (6R)-5,10-methylene-5,6,7,8-tetrahydrofolate + H2O = 2-dehydropantoate + (6S)-5,6,7,8-tetrahydrofolate. It participates in cofactor biosynthesis; (R)-pantothenate biosynthesis; (R)-pantoate from 3-methyl-2-oxobutanoate: step 1/2. Catalyzes the reversible reaction in which hydroxymethyl group from 5,10-methylenetetrahydrofolate is transferred onto alpha-ketoisovalerate to form ketopantoate. This Desulfitobacterium hafniense (strain DSM 10664 / DCB-2) protein is 3-methyl-2-oxobutanoate hydroxymethyltransferase.